Consider the following 93-residue polypeptide: MDYFRLAEKFLREMHAKYMKRVSRPGNTPRPWFDFSEERLLSRLFEEMDELREAVEKEDWENLRDELLDVANFCMYLWGKLSVKNIYDKGEEQ.

Residues 36 to 69 are a coiled coil; that stretch reads SEERLLSRLFEEMDELREAVEKEDWENLRDELLD.

This is an uncharacterized protein from Archaeoglobus fulgidus (strain ATCC 49558 / DSM 4304 / JCM 9628 / NBRC 100126 / VC-16).